The primary structure comprises 207 residues: Ribosomal RNA large subunit methyltransferase E (207 aa).

Glycine 61, tryptophan 63, aspartate 81, aspartate 97, and aspartate 122 together coordinate S-adenosyl-L-methionine. The active-site Proton acceptor is lysine 162.

It belongs to the class I-like SAM-binding methyltransferase superfamily. RNA methyltransferase RlmE family.

The protein resides in the cytoplasm. It catalyses the reaction uridine(2552) in 23S rRNA + S-adenosyl-L-methionine = 2'-O-methyluridine(2552) in 23S rRNA + S-adenosyl-L-homocysteine + H(+). Functionally, specifically methylates the uridine in position 2552 of 23S rRNA at the 2'-O position of the ribose in the fully assembled 50S ribosomal subunit. The sequence is that of Ribosomal RNA large subunit methyltransferase E from Pseudomonas putida (strain ATCC 700007 / DSM 6899 / JCM 31910 / BCRC 17059 / LMG 24140 / F1).